We begin with the raw amino-acid sequence, 506 residues long: EPTC-inducible aldehyde dehydrogenase (506 aa).

219-225 (GFGVEAG) is an NAD(+) binding site. Active-site residues include E263 and C302.

Belongs to the aldehyde dehydrogenase family.

The catalysed reaction is an aldehyde + NAD(+) + H2O = a carboxylate + NADH + 2 H(+). Degrades all aldehydes potentially generated by N dealkylation of thiocarbamates and may also participate in ethanolamine metabolism and further assimilation of degradation products by thiocarbamate-induced cytochrome P-450. This Rhodococcus erythropolis (Arthrobacter picolinophilus) protein is EPTC-inducible aldehyde dehydrogenase (thcA).